We begin with the raw amino-acid sequence, 80 residues long: Omega-conotoxin-like PuIA (80 aa).

The N-terminal stretch at methionine 1–alanine 22 is a signal peptide. Residues aspartate 23 to arginine 50 constitute a propeptide that is removed on maturation. Intrachain disulfides connect cysteine 52/cysteine 70, cysteine 59/cysteine 74, and cysteine 69/cysteine 78.

The protein belongs to the conotoxin O1 superfamily. Expressed by the venom duct.

It is found in the secreted. Omega-conotoxins act at presynaptic membranes, they bind and block voltage-gated calcium channels (Cav). In Conus pulicarius (Flea-bitten cone), this protein is Omega-conotoxin-like PuIA.